The primary structure comprises 434 residues: Peptidase B (434 aa).

The Mn(2+) site is built by Lys198 and Asp203. The active site involves Lys210. Residues Asp221, Asp280, and Glu282 each coordinate Mn(2+). Arg284 is a catalytic residue.

The protein belongs to the peptidase M17 family. In terms of assembly, homohexamer. Requires Mn(2+) as cofactor.

The protein resides in the cytoplasm. It catalyses the reaction Release of an N-terminal amino acid, Xaa, from a peptide or arylamide. Xaa is preferably Glu or Asp but may be other amino acids, including Leu, Met, His, Cys and Gln.. Functionally, probably plays an important role in intracellular peptide degradation. This Pasteurella multocida (strain Pm70) protein is Peptidase B.